A 414-amino-acid chain; its full sequence is Probable serine/threonine-protein kinase CHK1 homolog (414 aa).

The Protein kinase domain occupies 4-255 (YELQETLASG…VSTVMKDPWV (252 aa)). Residues 10–18 (LASGSTSKV) and K32 contribute to the ATP site. Residue D121 is the Proton acceptor of the active site. The segment at 291–310 (PGEVHKTPRTRPVSSQPRRA) is disordered.

Belongs to the protein kinase superfamily. CAMK Ser/Thr protein kinase family. NIM1 subfamily.

Its subcellular location is the nucleus. The catalysed reaction is L-seryl-[protein] + ATP = O-phospho-L-seryl-[protein] + ADP + H(+). It carries out the reaction L-threonyl-[protein] + ATP = O-phospho-L-threonyl-[protein] + ADP + H(+). Functionally, serine/threonine-protein kinase which is required for checkpoint-mediated cell cycle arrest and activation of DNA repair in response to the presence of DNA damage or unreplicated DNA. May also negatively regulate cell cycle progression during unperturbed cell cycles. The protein is Probable serine/threonine-protein kinase CHK1 homolog (CHK1) of Encephalitozoon cuniculi (strain GB-M1) (Microsporidian parasite).